We begin with the raw amino-acid sequence, 247 residues long: Triosephosphate isomerase (247 aa).

Residues Asn-10 and Lys-12 each contribute to the substrate site. The Electrophile role is filled by His-94. Catalysis depends on Glu-164, which acts as the Proton acceptor.

Belongs to the triosephosphate isomerase family. As to quaternary structure, homodimer.

The catalysed reaction is D-glyceraldehyde 3-phosphate = dihydroxyacetone phosphate. It participates in carbohydrate biosynthesis; gluconeogenesis. Its pathway is carbohydrate degradation; glycolysis; D-glyceraldehyde 3-phosphate from glycerone phosphate: step 1/1. The protein is Triosephosphate isomerase (Tpi) of Drosophila melanogaster (Fruit fly).